We begin with the raw amino-acid sequence, 59 residues long: Small ribosomal subunit protein bS21 (59 aa).

Residues 27 to 59 (GLMAEMRKREHYEKPSVRRKKKAQARNKKKRYA) are disordered. Residues 31-42 (EMRKREHYEKPS) show a composition bias toward basic and acidic residues. Residues 43–59 (VRRKKKAQARNKKKRYA) are compositionally biased toward basic residues.

This sequence belongs to the bacterial ribosomal protein bS21 family.

This Carboxydothermus hydrogenoformans (strain ATCC BAA-161 / DSM 6008 / Z-2901) protein is Small ribosomal subunit protein bS21.